Here is a 428-residue protein sequence, read N- to C-terminus: Serine--tRNA ligase (428 aa).

An L-serine-binding site is contributed by 231-233 (TAE). Residue 262–264 (RSE) coordinates ATP. E285 lines the L-serine pocket. 349-352 (EISS) contributes to the ATP binding site. Residue S385 participates in L-serine binding.

It belongs to the class-II aminoacyl-tRNA synthetase family. Type-1 seryl-tRNA synthetase subfamily. As to quaternary structure, homodimer. The tRNA molecule binds across the dimer.

The protein resides in the cytoplasm. The enzyme catalyses tRNA(Ser) + L-serine + ATP = L-seryl-tRNA(Ser) + AMP + diphosphate + H(+). It carries out the reaction tRNA(Sec) + L-serine + ATP = L-seryl-tRNA(Sec) + AMP + diphosphate + H(+). The protein operates within aminoacyl-tRNA biosynthesis; selenocysteinyl-tRNA(Sec) biosynthesis; L-seryl-tRNA(Sec) from L-serine and tRNA(Sec): step 1/1. In terms of biological role, catalyzes the attachment of serine to tRNA(Ser). Is also able to aminoacylate tRNA(Sec) with serine, to form the misacylated tRNA L-seryl-tRNA(Sec), which will be further converted into selenocysteinyl-tRNA(Sec). In Staphylococcus epidermidis (strain ATCC 35984 / DSM 28319 / BCRC 17069 / CCUG 31568 / BM 3577 / RP62A), this protein is Serine--tRNA ligase.